Consider the following 84-residue polypeptide: Small ribosomal subunit protein uS17 (84 aa).

It belongs to the universal ribosomal protein uS17 family. Part of the 30S ribosomal subunit.

In terms of biological role, one of the primary rRNA binding proteins, it binds specifically to the 5'-end of 16S ribosomal RNA. The sequence is that of Small ribosomal subunit protein uS17 from Clostridium botulinum (strain Eklund 17B / Type B).